Here is a 457-residue protein sequence, read N- to C-terminus: Bifunctional protein GlmU (457 aa).

A pyrophosphorylase region spans residues 1–230; sequence MPLSLPLHIV…AQEVEGVNDL (230 aa). UDP-N-acetyl-alpha-D-glucosamine contacts are provided by residues 12 to 15, K26, Q78, 83 to 84, 105 to 107, G140, E155, N170, and N228; these read LAAG, GT, and YGD. A Mg(2+)-binding site is contributed by D107. Mg(2+) is bound at residue N228. Residues 231–251 form a linker region; sequence WQLTQLERAWQIRAARALCLQ. Positions 252 to 457 are N-acetyltransferase; it reads GARVADPARL…DGWQRPKKKT (206 aa). Residues R334 and K352 each coordinate UDP-N-acetyl-alpha-D-glucosamine. H364 serves as the catalytic Proton acceptor. UDP-N-acetyl-alpha-D-glucosamine contacts are provided by Y367 and N378. Acetyl-CoA contacts are provided by residues A381, 387-388, S406, A424, and R441; that span reads NY.

The protein in the N-terminal section; belongs to the N-acetylglucosamine-1-phosphate uridyltransferase family. This sequence in the C-terminal section; belongs to the transferase hexapeptide repeat family. In terms of assembly, homotrimer. Mg(2+) serves as cofactor.

The protein resides in the cytoplasm. The enzyme catalyses alpha-D-glucosamine 1-phosphate + acetyl-CoA = N-acetyl-alpha-D-glucosamine 1-phosphate + CoA + H(+). It carries out the reaction N-acetyl-alpha-D-glucosamine 1-phosphate + UTP + H(+) = UDP-N-acetyl-alpha-D-glucosamine + diphosphate. It participates in nucleotide-sugar biosynthesis; UDP-N-acetyl-alpha-D-glucosamine biosynthesis; N-acetyl-alpha-D-glucosamine 1-phosphate from alpha-D-glucosamine 6-phosphate (route II): step 2/2. It functions in the pathway nucleotide-sugar biosynthesis; UDP-N-acetyl-alpha-D-glucosamine biosynthesis; UDP-N-acetyl-alpha-D-glucosamine from N-acetyl-alpha-D-glucosamine 1-phosphate: step 1/1. Its pathway is bacterial outer membrane biogenesis; LPS lipid A biosynthesis. Catalyzes the last two sequential reactions in the de novo biosynthetic pathway for UDP-N-acetylglucosamine (UDP-GlcNAc). The C-terminal domain catalyzes the transfer of acetyl group from acetyl coenzyme A to glucosamine-1-phosphate (GlcN-1-P) to produce N-acetylglucosamine-1-phosphate (GlcNAc-1-P), which is converted into UDP-GlcNAc by the transfer of uridine 5-monophosphate (from uridine 5-triphosphate), a reaction catalyzed by the N-terminal domain. The protein is Bifunctional protein GlmU of Xylella fastidiosa (strain M23).